We begin with the raw amino-acid sequence, 37 residues long: Large ribosomal subunit protein bL36 (37 aa).

It belongs to the bacterial ribosomal protein bL36 family.

The protein is Large ribosomal subunit protein bL36 of Thioalkalivibrio sulfidiphilus (strain HL-EbGR7).